We begin with the raw amino-acid sequence, 317 residues long: Ribosomal protein L11 methyltransferase (317 aa).

S-adenosyl-L-methionine-binding residues include Thr139, Gly162, Asp184, and Asn226. The interval 274–297 (EHVATRPDPASPGGDRRAGRGDAG) is disordered.

The protein belongs to the methyltransferase superfamily. PrmA family.

It is found in the cytoplasm. It carries out the reaction L-lysyl-[protein] + 3 S-adenosyl-L-methionine = N(6),N(6),N(6)-trimethyl-L-lysyl-[protein] + 3 S-adenosyl-L-homocysteine + 3 H(+). Its function is as follows. Methylates ribosomal protein L11. In Sorangium cellulosum (strain So ce56) (Polyangium cellulosum (strain So ce56)), this protein is Ribosomal protein L11 methyltransferase.